Consider the following 198-residue polypeptide: Acyl carrier protein phosphodiesterase (198 aa).

Belongs to the AcpH family.

It carries out the reaction holo-[ACP] + H2O = apo-[ACP] + (R)-4'-phosphopantetheine + H(+). In terms of biological role, converts holo-ACP to apo-ACP by hydrolytic cleavage of the phosphopantetheine prosthetic group from ACP. This chain is Acyl carrier protein phosphodiesterase, found in Photorhabdus laumondii subsp. laumondii (strain DSM 15139 / CIP 105565 / TT01) (Photorhabdus luminescens subsp. laumondii).